Reading from the N-terminus, the 252-residue chain is Geranylgeranylglyceryl phosphate synthase (252 aa).

Mg(2+) contacts are provided by aspartate 26 and serine 55. Residues 174-180, 205-206, and 227-228 contribute to the sn-glycerol 1-phosphate site; these read YLEAGSG, GG, and GT.

It belongs to the GGGP/HepGP synthase family. Group II subfamily. In terms of assembly, homotetramer. Homohexamer. The cofactor is Mg(2+).

It localises to the cytoplasm. The catalysed reaction is sn-glycerol 1-phosphate + (2E,6E,10E)-geranylgeranyl diphosphate = sn-3-O-(geranylgeranyl)glycerol 1-phosphate + diphosphate. Its pathway is membrane lipid metabolism; glycerophospholipid metabolism. In terms of biological role, prenyltransferase that catalyzes the transfer of the geranylgeranyl moiety of geranylgeranyl diphosphate (GGPP) to the C3 hydroxyl of sn-glycerol-1-phosphate (G1P). This reaction is the first ether-bond-formation step in the biosynthesis of archaeal membrane lipids. The polypeptide is Geranylgeranylglyceryl phosphate synthase (Thermococcus kodakarensis (strain ATCC BAA-918 / JCM 12380 / KOD1) (Pyrococcus kodakaraensis (strain KOD1))).